We begin with the raw amino-acid sequence, 1100 residues long: DNA-directed RNA polymerase subunit beta (1100 aa).

Residues 1064 to 1100 (YEEDKEVDLMADVNQRRTPSRPTYESMSVGDIDDDDD) are disordered. A compositionally biased stretch (polar residues) spans 1079–1089 (RRTPSRPTYES).

It belongs to the RNA polymerase beta chain family. In terms of assembly, in cyanobacteria the RNAP catalytic core is composed of 2 alpha, 1 beta, 1 beta', 1 gamma and 1 omega subunit. When a sigma factor is associated with the core the holoenzyme is formed, which can initiate transcription.

It catalyses the reaction RNA(n) + a ribonucleoside 5'-triphosphate = RNA(n+1) + diphosphate. In terms of biological role, DNA-dependent RNA polymerase catalyzes the transcription of DNA into RNA using the four ribonucleoside triphosphates as substrates. The sequence is that of DNA-directed RNA polymerase subunit beta from Synechococcus elongatus (strain ATCC 33912 / PCC 7942 / FACHB-805) (Anacystis nidulans R2).